The sequence spans 237 residues: UDP-2,3-diacylglucosamine hydrolase (237 aa).

Mn(2+) contacts are provided by aspartate 9, histidine 11, aspartate 42, asparagine 80, and histidine 115. Substrate is bound at residue 80-81 (NR). Positions 123, 161, 165, 168, and 196 each coordinate substrate. Histidine 196 and histidine 198 together coordinate Mn(2+).

The protein belongs to the LpxH family. Mn(2+) is required as a cofactor.

Its subcellular location is the cell inner membrane. It carries out the reaction UDP-2-N,3-O-bis[(3R)-3-hydroxytetradecanoyl]-alpha-D-glucosamine + H2O = 2-N,3-O-bis[(3R)-3-hydroxytetradecanoyl]-alpha-D-glucosaminyl 1-phosphate + UMP + 2 H(+). The protein operates within glycolipid biosynthesis; lipid IV(A) biosynthesis; lipid IV(A) from (3R)-3-hydroxytetradecanoyl-[acyl-carrier-protein] and UDP-N-acetyl-alpha-D-glucosamine: step 4/6. In terms of biological role, hydrolyzes the pyrophosphate bond of UDP-2,3-diacylglucosamine to yield 2,3-diacylglucosamine 1-phosphate (lipid X) and UMP by catalyzing the attack of water at the alpha-P atom. Involved in the biosynthesis of lipid A, a phosphorylated glycolipid that anchors the lipopolysaccharide to the outer membrane of the cell. The protein is UDP-2,3-diacylglucosamine hydrolase of Haemophilus influenzae (strain PittGG).